We begin with the raw amino-acid sequence, 424 residues long: Histidine--tRNA ligase (424 aa).

Belongs to the class-II aminoacyl-tRNA synthetase family. As to quaternary structure, homodimer.

Its subcellular location is the cytoplasm. The enzyme catalyses tRNA(His) + L-histidine + ATP = L-histidyl-tRNA(His) + AMP + diphosphate + H(+). The chain is Histidine--tRNA ligase from Salmonella paratyphi A (strain ATCC 9150 / SARB42).